The following is a 617-amino-acid chain: Protein fem-1 homolog C (617 aa).

An N-acetylmethionine modification is found at Met1. 7 ANK repeats span residues 2–31 (DLKT…KEEV), 40–70 (NGAT…SIEV), 82–111 (EGAP…SVNN), 115–144 (TNST…DLEV), 148–177 (HGHT…DVNR), 181–210 (KGNT…KMEK), and 213–242 (YGMT…TSKT). TPR repeat units lie at residues 245–279 (INAL…RYSD) and 338–371 (SYYI…QQNN). 2 ANK repeats span residues 481–523 (NNFS…DVNV) and 527–556 (DDNS…HFDA).

This sequence belongs to the fem-1 family. As to quaternary structure, component of a CRL2 E3 ubiquitin-protein ligase complex, also named ECS (Elongin BC-CUL2/5-SOCS-box protein) complex, composed of CUL2, Elongin BC (ELOB and ELOC), RBX1 and substrate-specific adapter FEM1C.

It participates in protein modification; protein ubiquitination. Its function is as follows. Substrate-recognition component of a Cul2-RING (CRL2) E3 ubiquitin-protein ligase complex of the DesCEND (destruction via C-end degrons) pathway, which recognizes a C-degron located at the extreme C terminus of target proteins, leading to their ubiquitination and degradation. The C-degron recognized by the DesCEND pathway is usually a motif of less than ten residues and can be present in full-length proteins, truncated proteins or proteolytically cleaved forms. The CRL2(FEM1C) complex specifically recognizes proteins with an arginine at the C-terminus: recognizes and binds proteins ending with -Lys/Arg-Xaa-Arg and -Lys/Arg-Xaa-Xaa-Arg C-degrons, such as SIL1 or OR51B2, leading to their ubiquitination and degradation. The CRL2(FEM1C) complex mediates ubiquitination and degradation of truncated MSRB1/SEPX1 selenoproteins produced by failed UGA/Sec decoding. In Bos taurus (Bovine), this protein is Protein fem-1 homolog C.